A 674-amino-acid polypeptide reads, in one-letter code: Xaa-Pro aminopeptidase 2 (674 aa).

Positions 1-22 (MAQAYWQCYPWLVLLCACAWSY) are cleaved as a signal peptide. N65 is a glycosylation site (N-linked (GlcNAc...) asparagine). R116 is a binding site for substrate. N-linked (GlcNAc...) asparagine glycosylation is found at N278 and N293. H430 lines the substrate pocket. Zn(2+) contacts are provided by D450, D461, and H524. H524, H533, and E555 together coordinate substrate. E555 and E569 together coordinate Zn(2+). A650 carries the GPI-anchor amidated alanine lipid modification. Positions 651–674 (SAPHTTSLASMWVASALAILSWSC) are cleaved as a propeptide — removed in mature form.

Belongs to the peptidase M24B family. As to quaternary structure, homotrimer. Requires Zn(2+) as cofactor. N-glycosylated. Expressed strongly in lung, liver and heart, and at lower levels in kidney, testis, brain, spleen and skeletal muscle.

Its subcellular location is the cell membrane. It carries out the reaction Release of any N-terminal amino acid, including proline, that is linked to proline, even from a dipeptide or tripeptide.. Its activity is regulated as follows. Inhibited by the chelating agents 1,10-phenanthroline and EDTA. Inhibited by the thiol-containing compounds 2-mercaptoethanol and dithiothreitol. Also inhibited by apstatin, captopril and p-(ch1oromercuri)benzenesulfonic acid. Weakly inhibited by D,L-2-mercaptomethyl-3-guanidinoethylthiopropanoic acid and N-[l-(R,S)-carboxy-(2-phenylethyl)]-Ala-Ala-Phe-p-aminobenzoate. Inhibited by ramiprilat and enalaprilat, in a Mn(2+)-dependent manner. Metal ions have a complex substrate- and concentration-dependent effect on activity. Activity towards Arg-Pro-Pro and Gly-Pro-Hyp is stimulated by Mn(2+) ion concentrations of 10-100 uM and then inhibited at Mn(2+) concentrations of 1-2 mM. Mn(2+) concentrations in excess of 2 mM stimulate activity towards Gly-Pro-Hyp but inhibit activity towards Arg-Pro-Pro. Zn(2+) and Co(2+) ions also inhibit activity towards Arg-Pro-Pro at high concentrations. Activity towards bradykinin is inhibited by Mn(2+) concentrations in excess of 1 mM. In terms of biological role, membrane-bound metalloprotease which catalyzes the removal of a penultimate prolyl residue from the N-termini of peptides, such as Arg-Pro-Pro. May play a role in the metabolism of the vasodilator bradykinin. The chain is Xaa-Pro aminopeptidase 2 from Rattus norvegicus (Rat).